Reading from the N-terminus, the 158-residue chain is Transcriptional repressor NrdR (158 aa).

Residues 1–20 are disordered; that stretch reads MRCPYCQSEDTQVKDSRPAE. The segment at 3 to 34 is a zinc-finger region; sequence CPYCQSEDTQVKDSRPAEDGAVIRRRRVCSVC. Over residues 11–20 the composition is skewed to basic and acidic residues; it reads TQVKDSRPAE. One can recognise an ATP-cone domain in the interval 49 to 139; it reads LMVVKKSGRR…VYRNFSKAVD (91 aa).

The protein belongs to the NrdR family. Requires Zn(2+) as cofactor.

Functionally, negatively regulates transcription of bacterial ribonucleotide reductase nrd genes and operons by binding to NrdR-boxes. The chain is Transcriptional repressor NrdR from Brucella anthropi (strain ATCC 49188 / DSM 6882 / CCUG 24695 / JCM 21032 / LMG 3331 / NBRC 15819 / NCTC 12168 / Alc 37) (Ochrobactrum anthropi).